A 92-amino-acid chain; its full sequence is Large ribosomal subunit protein bL25 (92 aa).

This sequence belongs to the bacterial ribosomal protein bL25 family. As to quaternary structure, part of the 50S ribosomal subunit; part of the 5S rRNA/L5/L18/L25 subcomplex. Contacts the 5S rRNA. Binds to the 5S rRNA independently of L5 and L18.

This is one of the proteins that binds to the 5S RNA in the ribosome where it forms part of the central protuberance. This is Large ribosomal subunit protein bL25 from Aliivibrio fischeri (strain MJ11) (Vibrio fischeri).